We begin with the raw amino-acid sequence, 3354 residues long: Cadherin-23 (3354 aa).

Positions 1-23 (MRYSLVTCYAVLWLLMLVPGSWG) are cleaved as a signal peptide. Residues 24-3064 (QVNRLPFFTN…SVQLPDDMSA (3041 aa)) lie on the Extracellular side of the membrane. 27 Cadherin domains span residues 34–132 (HFFD…APTF), 133–236 (HNQP…DPIF), 237–348 (INLP…APEF), 349–460 (NSSE…RPIF), 461–561 (SQPL…VPTF), 562–671 (QKDA…PPTF), 672–784 (SKPA…APYY), 779–890 (KDAP…DPTF), 891–995 (RNLP…TPTF), 996–1102 (FPAV…RPIF), 1103–1208 (LQSS…APVF), 1210–1313 (QQQY…AVQF), 1314–1418 (SNAS…SPRF), 1420–1527 (FTSD…PPVI), 1529–1634 (SPFG…APVF), 1635–1744 (QQPH…VPTF), 1745–1851 (PRDY…DPVL), 1852–1959 (LNLP…HPLF), 1960–2069 (TEGT…WPTF), 2070–2174 (SPPT…RPEF), 2175–2293 (LNPI…TPQF), 2297–2402 (GITY…NPIF), 2403–2509 (DQPS…RPQF), 2510–2611 (SKPQ…RPVF), 2614–2722 (PPNG…EPLF), 2729–2846 (SPQY…PPRF), and 2847–2975 (TKAE…EEEF). N-linked (GlcNAc...) asparagine glycosylation is found at asparagine 155 and asparagine 206. N-linked (GlcNAc...) asparagine glycans are attached at residues asparagine 349, asparagine 393, asparagine 434, asparagine 466, asparagine 472, asparagine 602, asparagine 694, asparagine 765, asparagine 810, asparagine 827, asparagine 941, asparagine 1001, asparagine 1018, asparagine 1171, asparagine 1282, asparagine 1315, asparagine 1473, asparagine 1534, asparagine 1651, asparagine 1667, asparagine 1818, asparagine 1857, asparagine 1889, asparagine 1902, asparagine 2014, asparagine 2050, asparagine 2129, asparagine 2168, asparagine 2195, asparagine 2263, asparagine 2357, and asparagine 2369. Residues asparagine 2578, asparagine 2616, asparagine 2749, asparagine 2808, asparagine 2877, asparagine 2896, asparagine 2941, and asparagine 2981 are each glycosylated (N-linked (GlcNAc...) asparagine). Residues 3065–3085 (LQMAIIVLAILLFLAAMLFVL) traverse the membrane as a helical segment. At 3086–3354 (MNWYYRTIHK…MESPLEITEL (269 aa)) the chain is on the cytoplasmic side.

As to quaternary structure, interacts with USH1C and USH1G. antiparallel heterodimer with PCDH15. Isoform C1: Interacts with CAMSAP3; leading to inhibit CAMSAP3 ability to induce microtubule bundle formation. In terms of tissue distribution, in adult animals relatively high levels of expression are found in testis, skeletal muscle, heart, eye and thymus, and lower expression in kidney, lung and brain. Found in the sensory hair cells of the inner ear.

It is found in the cell membrane. Cadherins are calcium-dependent cell adhesion proteins. They preferentially interact with themselves in a homophilic manner in connecting cells. CDH23 is required for establishing and/or maintaining the proper organization of the stereocilia bundle of hair cells in the cochlea and the vestibule during late embryonic/early postnatal development. It is part of the functional network formed by USH1C, USH1G, CDH23 and MYO7A that mediates mechanotransduction in cochlear hair cells. Required for normal hearing. This Mus musculus (Mouse) protein is Cadherin-23 (Cdh23).